The sequence spans 191 residues: MKDRQDYYYWKAKKEGYRSRAAYKLLQMNRTFKLIREGDLVLDLGATPGGWSQVAALLGARVVAVDINPMKPLENVTFIRGDITLPETLEKIREISPDYDVVMSDASPKISGKWTIDHLRSIDLARASFSIAKEVLKPGGNFVVKVFQGEEIQKFFNELKPHFRFKKFHSPQASRKRSAEVYFIGKRFRKI.

Gly-49, Trp-51, Asp-66, Asp-82, and Asp-105 together coordinate S-adenosyl-L-methionine. Lys-145 acts as the Proton acceptor in catalysis.

Belongs to the class I-like SAM-binding methyltransferase superfamily. RNA methyltransferase RlmE family.

Its subcellular location is the cytoplasm. It carries out the reaction uridine(2552) in 23S rRNA + S-adenosyl-L-methionine = 2'-O-methyluridine(2552) in 23S rRNA + S-adenosyl-L-homocysteine + H(+). In terms of biological role, specifically methylates the uridine in position 2552 of 23S rRNA at the 2'-O position of the ribose in the fully assembled 50S ribosomal subunit. This Archaeoglobus fulgidus (strain ATCC 49558 / DSM 4304 / JCM 9628 / NBRC 100126 / VC-16) protein is Ribosomal RNA large subunit methyltransferase E.